A 237-amino-acid chain; its full sequence is Class B acid phosphatase (237 aa).

The N-terminal stretch at Met-1–Ala-23 is a signal peptide. Catalysis depends on Asp-69, which acts as the Nucleophile. The Mg(2+) site is built by Asp-69 and Asp-71. Asp-71 acts as the Proton donor in catalysis. Substrate contacts are provided by residues Thr-137–Gly-138 and Lys-177. Asp-192 contacts Mg(2+).

The protein belongs to the class B bacterial acid phosphatase family. As to quaternary structure, homotetramer. Mg(2+) serves as cofactor.

It is found in the periplasm. It catalyses the reaction a phosphate monoester + H2O = an alcohol + phosphate. In terms of biological role, dephosphorylates several organic phosphate monoesters. Also has a phosphotransferase activity catalyzing the transfer of low-energy phosphate groups from organic phosphate monoesters to free hydroxyl groups of various organic compounds. This is Class B acid phosphatase from Salmonella arizonae (strain ATCC BAA-731 / CDC346-86 / RSK2980).